The primary structure comprises 60 residues: Large ribosomal subunit protein uL30 (60 aa).

It belongs to the universal ribosomal protein uL30 family. Part of the 50S ribosomal subunit.

The sequence is that of Large ribosomal subunit protein uL30 from Sphingopyxis alaskensis (strain DSM 13593 / LMG 18877 / RB2256) (Sphingomonas alaskensis).